Consider the following 142-residue polypeptide: Large ribosomal subunit protein uL11 (142 aa).

This sequence belongs to the universal ribosomal protein uL11 family. In terms of assembly, part of the ribosomal stalk of the 50S ribosomal subunit. Interacts with L10 and the large rRNA to form the base of the stalk. L10 forms an elongated spine to which L12 dimers bind in a sequential fashion forming a multimeric L10(L12)X complex. One or more lysine residues are methylated.

Its function is as follows. Forms part of the ribosomal stalk which helps the ribosome interact with GTP-bound translation factors. This chain is Large ribosomal subunit protein uL11, found in Mycobacterium leprae (strain Br4923).